Reading from the N-terminus, the 212-residue chain is Ribonuclease HII (212 aa).

An RNase H type-2 domain is found at 20 to 209 (TCVVGVDEVG…VHNILYQEAS (190 aa)). A divalent metal cation is bound by residues Asp26, Glu27, and Asp117.

This sequence belongs to the RNase HII family. Requires Mn(2+) as cofactor. Mg(2+) serves as cofactor.

It localises to the cytoplasm. The catalysed reaction is Endonucleolytic cleavage to 5'-phosphomonoester.. Endonuclease that specifically degrades the RNA of RNA-DNA hybrids. The chain is Ribonuclease HII from Cereibacter sphaeroides (strain ATCC 17023 / DSM 158 / JCM 6121 / CCUG 31486 / LMG 2827 / NBRC 12203 / NCIMB 8253 / ATH 2.4.1.) (Rhodobacter sphaeroides).